We begin with the raw amino-acid sequence, 583 residues long: Ribosomal lysine N-methyltransferase 1 (583 aa).

Positions 22–274 (EELKFLYTDL…QSRELSNNYG (253 aa)) constitute an SET domain. Tyr273 contributes to the S-adenosyl-L-methionine binding site. Coiled coils occupy residues 378–407 (KAEE…KLNS) and 433–459 (KGQK…ENKH).

This sequence belongs to the class V-like SAM-binding methyltransferase superfamily. RKM1 family.

The protein resides in the cytoplasm. The protein localises to the nucleus. Its function is as follows. S-adenosyl-L-methionine-dependent protein-lysine N-methyltransferase that monomethylates ribosomal protein S18 (RPS18A and RPS18B) at 'Lys-48' and dimethylates ribosomal protein L23 (RPL23A and RPL23B) at 'Lys-106' and 'Lys-110'. In Saccharomyces cerevisiae (strain ATCC 204508 / S288c) (Baker's yeast), this protein is Ribosomal lysine N-methyltransferase 1.